Reading from the N-terminus, the 485-residue chain is NADH-quinone oxidoreductase subunit N (485 aa).

The next 14 membrane-spanning stretches (helical) occupy residues 8 to 28 (LIAL…MLSI), 35 to 55 (FLNA…LWFV), 75 to 95 (LYTG…YPWL), 105 to 125 (FYLL…ANHL), 127 to 147 (ALFL…GYAF), 159 to 179 (YTIL…LVYA), 203 to 223 (LLAG…LVPF), 235 to 255 (PAPV…GVVM), 271 to 291 (VVLG…ALSQ), 297 to 317 (LLGY…IALQ), 326 to 346 (VGVY…VVSL), 374 to 394 (AVMT…GFIG), 408 to 430 (WWLV…RVAV), and 455 to 475 (IVVL…QPLI).

This sequence belongs to the complex I subunit 2 family. NDH-1 is composed of 13 different subunits. Subunits NuoA, H, J, K, L, M, N constitute the membrane sector of the complex.

Its subcellular location is the cell inner membrane. The catalysed reaction is a quinone + NADH + 5 H(+)(in) = a quinol + NAD(+) + 4 H(+)(out). NDH-1 shuttles electrons from NADH, via FMN and iron-sulfur (Fe-S) centers, to quinones in the respiratory chain. The immediate electron acceptor for the enzyme in this species is believed to be ubiquinone. Couples the redox reaction to proton translocation (for every two electrons transferred, four hydrogen ions are translocated across the cytoplasmic membrane), and thus conserves the redox energy in a proton gradient. The polypeptide is NADH-quinone oxidoreductase subunit N (Klebsiella pneumoniae subsp. pneumoniae (strain ATCC 700721 / MGH 78578)).